Consider the following 353-residue polypeptide: Pupal cuticle protein PCP52 (353 aa).

The signal sequence occupies residues 1–15 (MRVLILSAFIACATA). Residues 166 to 195 (AEAPEGNKDEGNKDSVQVESSATESESDKA) form a disordered region. Polar residues predominate over residues 179-189 (DSVQVESSATE).

In terms of biological role, component of the cuticle of the pupa of Galleria mellonella. The chain is Pupal cuticle protein PCP52 (PCP52) from Galleria mellonella (Greater wax moth).